We begin with the raw amino-acid sequence, 308 residues long: Low density lipoprotein receptor adapter protein 1 (308 aa).

At Met-1 the chain carries N-acetylmethionine. A phosphoserine mark is found at Ser-14, Ser-186, and Ser-202. One can recognise a PID domain in the interval 42-196; the sequence is LLEGMLFSLK…QEGGDVLGAR (155 aa). Residues 212-216 carry the Clathrin box motif; the sequence is LLDLE. Positions 249–276 are AP-2 complex binding; it reads WELDDGLDEAFSRLAQSRTNPQVLDTGL. Positions 257 to 266 match the [DE]-X(1,2)-F-X-X-[FL]-X-X-X-R motif motif; that stretch reads EAFSRLAQSR.

As to quaternary structure, interacts (via PID domain) with LDLR (via NPXY motif). Binds to soluble clathrin trimers. Interacts with AP2B1; the interaction mediates the association with the AP-2 complex. Interacts with VLDLR. Interacts with LRP2. As to expression, expressed at high levels in the kidney, liver, and placenta, with lower levels detectable in brain, heart, muscle, colon, spleen, intestine, lung, and leukocytes.

Its subcellular location is the cytoplasm. Its function is as follows. Adapter protein (clathrin-associated sorting protein (CLASP)) required for efficient endocytosis of the LDL receptor (LDLR) in polarized cells such as hepatocytes and lymphocytes, but not in non-polarized cells (fibroblasts). May be required for LDL binding and internalization but not for receptor clustering in coated pits. May facilitate the endocytosis of LDLR and LDLR-LDL complexes from coated pits by stabilizing the interaction between the receptor and the structural components of the pits. May also be involved in the internalization of other LDLR family members. Binds to phosphoinositides, which regulate clathrin bud assembly at the cell surface. Required for trafficking of LRP2 to the endocytic recycling compartment which is necessary for LRP2 proteolysis, releasing a tail fragment which translocates to the nucleus and mediates transcriptional repression. This Homo sapiens (Human) protein is Low density lipoprotein receptor adapter protein 1.